The following is a 284-amino-acid chain: uncharacterized protein (284 aa).

The region spanning 4–133 (PLHLFWHRRD…AVHRQWDQLL (130 aa)) is the Photolyase/cryptochrome alpha/beta domain.

This is an uncharacterized protein from Synechococcus sp. (strain PCC 6716).